The following is a 101-amino-acid chain: Large ribosomal subunit protein bL28 (101 aa).

The protein belongs to the bacterial ribosomal protein bL28 family.

The sequence is that of Large ribosomal subunit protein bL28 from Rhodopseudomonas palustris (strain BisB5).